The sequence spans 223 residues: Ribose-5-phosphate isomerase A (223 aa).

Substrate-binding positions include 26-29 (TGST), 82-85 (DGAD), and 95-98 (KGGG). Glu104 (proton acceptor) is an active-site residue. Lys122 lines the substrate pocket.

The protein belongs to the ribose 5-phosphate isomerase family. As to quaternary structure, homodimer.

It carries out the reaction aldehydo-D-ribose 5-phosphate = D-ribulose 5-phosphate. It participates in carbohydrate degradation; pentose phosphate pathway; D-ribose 5-phosphate from D-ribulose 5-phosphate (non-oxidative stage): step 1/1. Catalyzes the reversible conversion of ribose-5-phosphate to ribulose 5-phosphate. The sequence is that of Ribose-5-phosphate isomerase A from Streptococcus agalactiae serotype III (strain NEM316).